The sequence spans 875 residues: Neurotrypsin (875 aa).

A signal peptide spans 1 to 20 (MTLARFALALLFGVLPEVVG). The N-linked (GlcNAc...) asparagine glycan is linked to asparagine 26. Residues 51–72 (QRHRRTRPPPPLPRFPRPPRAL) form a disordered region. Positions 58 to 71 (PPPPLPRFPRPPRA) are enriched in pro residues. The region spanning 93 to 165 (CPAGEPWVSV…GKVDWGYCDC (73 aa)) is the Kringle domain. Intrachain disulfides connect cysteine 93-cysteine 165, cysteine 109-cysteine 149, cysteine 138-cysteine 163, cysteine 195-cysteine 259, cysteine 208-cysteine 269, cysteine 239-cysteine 249, cysteine 305-cysteine 369, cysteine 318-cysteine 379, cysteine 349-cysteine 359, cysteine 412-cysteine 475, cysteine 425-cysteine 485, cysteine 455-cysteine 465, cysteine 525-cysteine 589, cysteine 538-cysteine 599, cysteine 569-cysteine 579, cysteine 619-cysteine 750, cysteine 661-cysteine 677, cysteine 765-cysteine 831, cysteine 794-cysteine 808, and cysteine 821-cysteine 850. SRCR domains follow at residues 170-271 (VRLR…MCSF), 280-381 (IRLV…SCTP), 387-487 (IRLA…ACYP), and 500-601 (VRLM…ICDY). The tract at residues 619–630 (CGLRLLHRRQKR) is zymogen activation region. The Peptidase S1 domain occupies 631–874 (IIGGKNSLRG…FVPWIKSVTK (244 aa)). Histidine 676 serves as the catalytic Charge relay system. Residue asparagine 683 is glycosylated (N-linked (GlcNAc...) asparagine). The active-site Charge relay system is aspartate 726. Serine 825 (charge relay system) is an active-site residue.

It belongs to the peptidase S1 family.

The protein localises to the secreted. Plays a role in neuronal plasticity and the proteolytic action may subserve structural reorganizations associated with learning and memory operations. The polypeptide is Neurotrypsin (PRSS12) (Saguinus labiatus (Red-chested mustached tamarin)).